A 156-amino-acid chain; its full sequence is Small ribosomal subunit protein uS7 (156 aa).

This sequence belongs to the universal ribosomal protein uS7 family. In terms of assembly, part of the 30S ribosomal subunit. Contacts proteins S9 and S11.

In terms of biological role, one of the primary rRNA binding proteins, it binds directly to 16S rRNA where it nucleates assembly of the head domain of the 30S subunit. Is located at the subunit interface close to the decoding center, probably blocks exit of the E-site tRNA. The polypeptide is Small ribosomal subunit protein uS7 (Anaeromyxobacter dehalogenans (strain 2CP-1 / ATCC BAA-258)).